Here is a 303-residue protein sequence, read N- to C-terminus: Acetylglutamate kinase (303 aa).

Substrate contacts are provided by residues 69–70 (GG), arginine 91, and asparagine 201.

It belongs to the acetylglutamate kinase family. ArgB subfamily.

The protein resides in the cytoplasm. The enzyme catalyses N-acetyl-L-glutamate + ATP = N-acetyl-L-glutamyl 5-phosphate + ADP. Its pathway is amino-acid biosynthesis; L-arginine biosynthesis; N(2)-acetyl-L-ornithine from L-glutamate: step 2/4. Its function is as follows. Catalyzes the ATP-dependent phosphorylation of N-acetyl-L-glutamate. In Novosphingobium aromaticivorans (strain ATCC 700278 / DSM 12444 / CCUG 56034 / CIP 105152 / NBRC 16084 / F199), this protein is Acetylglutamate kinase.